The following is a 434-amino-acid chain: Trigger factor (434 aa).

A PPIase FKBP-type domain is found at G161–P246.

Belongs to the FKBP-type PPIase family. Tig subfamily.

The protein localises to the cytoplasm. It carries out the reaction [protein]-peptidylproline (omega=180) = [protein]-peptidylproline (omega=0). Its function is as follows. Involved in protein export. Acts as a chaperone by maintaining the newly synthesized protein in an open conformation. Functions as a peptidyl-prolyl cis-trans isomerase. The protein is Trigger factor of Aromatoleum aromaticum (strain DSM 19018 / LMG 30748 / EbN1) (Azoarcus sp. (strain EbN1)).